A 214-amino-acid polypeptide reads, in one-letter code: MIEHPGFVLWFTGLSGAGKTTIAVALENQLRARGIRIERLDGDTVRQSLTKDLGFSKEDRDKNIERVTFVAKLLSRNNVAVLSSFISPYAATRDHVRGETTNFIEVFVDAPLETCIERDVKGMYKKAIAGEIPNFTGISDPYEAPANPDIHVKTHEQTLEESVQTIIRRSSHGWNRTNTFPLKSRPNPPHRHKSKSSRAGEPFISPVFVLSIIA.

Residue 13–20 coordinates ATP; the sequence is GLSGAGKT. The Phosphoserine intermediate role is filled by serine 87. The interval 174–199 is disordered; the sequence is WNRTNTFPLKSRPNPPHRHKSKSSRA.

It belongs to the APS kinase family.

It catalyses the reaction adenosine 5'-phosphosulfate + ATP = 3'-phosphoadenylyl sulfate + ADP + H(+). It participates in sulfur metabolism; hydrogen sulfide biosynthesis; sulfite from sulfate: step 2/3. Functionally, catalyzes the synthesis of activated sulfate. The sequence is that of Probable adenylyl-sulfate kinase from Pseudomonas aeruginosa.